The chain runs to 101 residues: Apolipoprotein C-II (101 aa).

The first 17 residues, 1-17, serve as a signal peptide directing secretion; the sequence is MGTRFLLALCLVLLVLG. Residues 66–74 form a lipid binding region; that stretch reads AVDEKLRDL. Positions 78 to 101 are lipoprotein lipase cofactor; it reads STAAMSTYTGIFTDQVLSVLKGEE.

Belongs to the apolipoprotein C2 family. Post-translationally, proapolipoprotein C-II is synthesized as a sialic acid containing glycoprotein which is subsequently desialylated prior to its proteolytic processing. Proapolipoprotein C-II, the major form found in plasma undergoes proteolytic cleavage of its N-terminal hexapeptide to generate apolipoprotein C-II, which occurs as the minor form in plasma.

The protein localises to the secreted. Component of chylomicrons, very low-density lipoproteins (VLDL), low-density lipoproteins (LDL), and high-density lipoproteins (HDL) in plasma. Plays an important role in lipoprotein metabolism as an activator of lipoprotein lipase. Both proapolipoprotein C-II and apolipoprotein C-II can activate lipoprotein lipase. This is Apolipoprotein C-II (APOC2) from Chlorocebus sabaeus (Green monkey).